The chain runs to 658 residues: Staphylocoagulase (658 aa).

An N-terminal signal peptide occupies residues 1-26; that stretch reads MKKQIISLGALAVASSLFTWDNKADA. Polar residues-rich tracts occupy residues 391–406, 428–440, 499–514, and 521–531; these read MEQN…TQPT, GTES…QGES, PSET…QDGT, and PTQNKPSETNA. The segment at 391 to 531 is disordered; the sequence is MEQNRPSLSD…TQNKPSETNA (141 aa). 6 tandem repeats follow at residues 492 to 518, 519 to 545, 546 to 572, 573 to 599, 600 to 626, and 627 to 653. The segment at 492-653 is 6 X 27 AA tandem repeats of A-R-P-[RT]-[FQY]-[NK]-K-P-S-[EK]-T-N-A-Y-N-V-T-T-[NH]-[QA]-[DN]-G-[TQ]-[VA]-[ST]-Y-G; that stretch reads ARPRFNKPSE…THADGTATYG (162 aa). The segment at 619–658 is disordered; sequence ANGQVSYGARPTQKKPSETNAYNVTTHADGTATYGPRVTK. Residues 636–646 are compositionally biased toward polar residues; sequence ETNAYNVTTHA.

The protein belongs to the staphylocoagulase family.

In terms of biological role, staphylocoagulase is an extracellular protein which specifically forms a complex with human prothrombin. This complex named staphylothrombin can clot fibrinogen without any proteolytic cleavage of prothrombin. This Staphylococcus aureus protein is Staphylocoagulase.